The following is a 1081-amino-acid chain: Dyslexia-associated protein KIAA0319 homolog (1081 aa).

The first 22 residues, 1–22 (MVSPPGVLSSLLLLAAMAGGSS), serve as a signal peptide directing secretion. In terms of domain architecture, MANSC spans 23–99 (QQCSEGRTYS…PRTTGPIRSY (77 aa)). Residues 23–964 (QQCSEGRTYS…WDGESNCEWS (942 aa)) lie on the Extracellular side of the membrane. The tract at residues 168-331 (LQPSNQQDPR…VLTGLTPPPW (164 aa)) is disordered. N-linked (GlcNAc...) asparagine glycosylation is present at Asn196. 2 stretches are compositionally biased toward polar residues: residues 197-206 (ATATGDNSAA) and 222-234 (EQLQ…TWSP). Asn228 is a glycosylation site (N-linked (GlcNAc...) asparagine). Residues 236-255 (PGHSSISSVWPSSASPLPTE) are compositionally biased toward low complexity. 2 N-linked (GlcNAc...) asparagine glycosylation sites follow: Asn272 and Asn302. Composition is skewed to polar residues over residues 283-307 (HNPS…TVTP) and 314-324 (TPTFPTSTVLT). PKD domains are found at residues 345 to 436 (AVSA…VMPA), 444 to 533 (VAVV…IRDA), 539 to 629 (VANA…VQAE), 630 to 723 (NNQA…VKKE), and 729 to 820 (RAQA…VLPD). N-linked (GlcNAc...) asparagine glycosylation is found at Asn430, Asn507, Asn522, Asn545, and Asn560. Asn742 carries N-linked (GlcNAc...) asparagine glycosylation. The helical transmembrane segment at 965–985 (VFYVAALALTLTLLTGAVSWL) threads the bilayer. Residues 986-1081 (CICCCRRRKR…VSFGYYSKDR (96 aa)) lie on the Cytoplasmic side of the membrane. The Endocytosis signal motif lies at 1004–1007 (YTIL). Phosphoserine is present on Ser1009.

In terms of assembly, homodimer. Interacts with AP2M1; required for clathrin-mediated endocytosis. In terms of processing, N-glycosylated. Post-translationally, O-glycosylated. Shedding of the extracellular domain and intramembrane cleavage produce several proteolytic products. The intramembrane cleavage releases a soluble cytoplasmic polypeptide that translocates to the nucleolus.

The protein localises to the cell membrane. It is found in the early endosome membrane. Its function is as follows. Involved in neuronal migration during development of the cerebral neocortex. May function in a cell autonomous and a non-cell autonomous manner and play a role in appropriate adhesion between migrating neurons and radial glial fibers. May also regulate growth and differentiation of dendrites. The polypeptide is Dyslexia-associated protein KIAA0319 homolog (Kiaa0319) (Mus musculus (Mouse)).